We begin with the raw amino-acid sequence, 64 residues long: Conotoxin VnMLCL-042 (64 aa).

The signal sequence occupies residues 1-19; the sequence is MLCLPVFIILLLLASPAAP. The propeptide occupies 20–43; sequence NPLQTRIQSNLIRAGPEDANMKTD. The residue at position 63 (M63) is a Methionine amide.

Belongs to the conotoxin T superfamily. As to expression, expressed by the venom duct.

It is found in the secreted. This chain is Conotoxin VnMLCL-042, found in Conus ventricosus (Mediterranean cone).